We begin with the raw amino-acid sequence, 184 residues long: Prolyl-tRNA synthetase associated domain-containing protein 1 (184 aa).

The protein belongs to the PRORSD1 family.

In Danio rerio (Zebrafish), this protein is Prolyl-tRNA synthetase associated domain-containing protein 1 (Prorsd1).